A 345-amino-acid polypeptide reads, in one-letter code: Phosphoribosylformylglycinamidine cyclo-ligase (345 aa).

Belongs to the AIR synthase family.

The protein localises to the cytoplasm. It carries out the reaction 2-formamido-N(1)-(5-O-phospho-beta-D-ribosyl)acetamidine + ATP = 5-amino-1-(5-phospho-beta-D-ribosyl)imidazole + ADP + phosphate + H(+). The protein operates within purine metabolism; IMP biosynthesis via de novo pathway; 5-amino-1-(5-phospho-D-ribosyl)imidazole from N(2)-formyl-N(1)-(5-phospho-D-ribosyl)glycinamide: step 2/2. The sequence is that of Phosphoribosylformylglycinamidine cyclo-ligase from Escherichia coli (strain 55989 / EAEC).